The primary structure comprises 269 residues: tRNA pseudouridine synthase A (269 aa).

Asp52 acts as the Nucleophile in catalysis. Tyr110 lines the substrate pocket.

The protein belongs to the tRNA pseudouridine synthase TruA family. As to quaternary structure, homodimer.

The enzyme catalyses uridine(38/39/40) in tRNA = pseudouridine(38/39/40) in tRNA. Functionally, formation of pseudouridine at positions 38, 39 and 40 in the anticodon stem and loop of transfer RNAs. In Bacteroides thetaiotaomicron (strain ATCC 29148 / DSM 2079 / JCM 5827 / CCUG 10774 / NCTC 10582 / VPI-5482 / E50), this protein is tRNA pseudouridine synthase A.